The following is a 334-amino-acid chain: Holliday junction branch migration complex subunit RuvB (334 aa).

A large ATPase domain (RuvB-L) region spans residues 4-186 (ADRLIAPENP…FGITQRLEYY (183 aa)). ATP-binding positions include isoleucine 25, arginine 26, glycine 67, lysine 70, threonine 71, threonine 72, 133-135 (EDY), arginine 176, tyrosine 186, and arginine 223. Threonine 71 is a binding site for Mg(2+). The segment at 187–257 (KIPDLQNIVQ…TADKALNMLD (71 aa)) is small ATPAse domain (RuvB-S). The segment at 260 to 334 (SKGFDYMDRK…RAYLHFGIEK (75 aa)) is head domain (RuvB-H). DNA-binding residues include arginine 315 and arginine 320.

The protein belongs to the RuvB family. As to quaternary structure, homohexamer. Forms an RuvA(8)-RuvB(12)-Holliday junction (HJ) complex. HJ DNA is sandwiched between 2 RuvA tetramers; dsDNA enters through RuvA and exits via RuvB. An RuvB hexamer assembles on each DNA strand where it exits the tetramer. Each RuvB hexamer is contacted by two RuvA subunits (via domain III) on 2 adjacent RuvB subunits; this complex drives branch migration. In the full resolvosome a probable DNA-RuvA(4)-RuvB(12)-RuvC(2) complex forms which resolves the HJ.

Its subcellular location is the cytoplasm. It catalyses the reaction ATP + H2O = ADP + phosphate + H(+). Functionally, the RuvA-RuvB-RuvC complex processes Holliday junction (HJ) DNA during genetic recombination and DNA repair, while the RuvA-RuvB complex plays an important role in the rescue of blocked DNA replication forks via replication fork reversal (RFR). RuvA specifically binds to HJ cruciform DNA, conferring on it an open structure. The RuvB hexamer acts as an ATP-dependent pump, pulling dsDNA into and through the RuvAB complex. RuvB forms 2 homohexamers on either side of HJ DNA bound by 1 or 2 RuvA tetramers; 4 subunits per hexamer contact DNA at a time. Coordinated motions by a converter formed by DNA-disengaged RuvB subunits stimulates ATP hydrolysis and nucleotide exchange. Immobilization of the converter enables RuvB to convert the ATP-contained energy into a lever motion, pulling 2 nucleotides of DNA out of the RuvA tetramer per ATP hydrolyzed, thus driving DNA branch migration. The RuvB motors rotate together with the DNA substrate, which together with the progressing nucleotide cycle form the mechanistic basis for DNA recombination by continuous HJ branch migration. Branch migration allows RuvC to scan DNA until it finds its consensus sequence, where it cleaves and resolves cruciform DNA. The polypeptide is Holliday junction branch migration complex subunit RuvB (Vibrio vulnificus (strain YJ016)).